The following is a 221-amino-acid chain: Factor arrest protein 7 (221 aa).

As to quaternary structure, component of a complex at least composed of FAR3, FAR7, FAR8, FAR10, FAR11 and VPS64.

Its function is as follows. Participates in the control of the reentry into the cell cycle following pheromone treatment. This chain is Factor arrest protein 7 (FAR7), found in Saccharomyces cerevisiae (strain ATCC 204508 / S288c) (Baker's yeast).